The chain runs to 149 residues: Nucleoside diphosphate kinase (149 aa).

ATP contacts are provided by Lys9, Phe57, Arg85, Thr91, Arg102, and Asn112. His115 (pros-phosphohistidine intermediate) is an active-site residue.

The protein belongs to the NDK family. Homotetramer. The cofactor is Mg(2+).

It localises to the cytoplasm. It carries out the reaction a 2'-deoxyribonucleoside 5'-diphosphate + ATP = a 2'-deoxyribonucleoside 5'-triphosphate + ADP. It catalyses the reaction a ribonucleoside 5'-diphosphate + ATP = a ribonucleoside 5'-triphosphate + ADP. Its function is as follows. Major role in the synthesis of nucleoside triphosphates other than ATP. The ATP gamma phosphate is transferred to the NDP beta phosphate via a ping-pong mechanism, using a phosphorylated active-site intermediate. This is Nucleoside diphosphate kinase from Nostoc punctiforme (strain ATCC 29133 / PCC 73102).